Here is a 218-residue protein sequence, read N- to C-terminus: Adenylate kinase (218 aa).

10–15 (GAGKGT) lines the ATP pocket. Positions 30–59 (STGDMLRAAVKAGTPLGIAAKKIMDEGGLV) are NMP. AMP contacts are provided by residues Thr-31, Arg-36, 57-59 (GLV), 85-88 (GFPR), and Gln-92. The tract at residues 122 to 159 (GRRVHPASGRTYHVKFNPPKVAGKDDLTGEELIQRDDD) is LID. Residues Arg-123 and 132-133 (TY) each bind ATP. The AMP site is built by Arg-156 and Arg-167. ATP is bound at residue Gly-203.

Belongs to the adenylate kinase family. As to quaternary structure, monomer.

It is found in the cytoplasm. It carries out the reaction AMP + ATP = 2 ADP. The protein operates within purine metabolism; AMP biosynthesis via salvage pathway; AMP from ADP: step 1/1. Functionally, catalyzes the reversible transfer of the terminal phosphate group between ATP and AMP. Plays an important role in cellular energy homeostasis and in adenine nucleotide metabolism. The sequence is that of Adenylate kinase from Janthinobacterium sp. (strain Marseille) (Minibacterium massiliensis).